A 455-amino-acid polypeptide reads, in one-letter code: Squamosa promoter-binding-like protein 16 (455 aa).

An SBP-type zinc finger spans residues cysteine 115 to proline 192. Zn(2+)-binding residues include cysteine 118, cysteine 123, cysteine 140, histidine 143, cysteine 159, cysteine 162, histidine 166, and cysteine 178. A Bipartite nuclear localization signal motif is present at residues lysine 175–lysine 191. The tract at residues leucine 182–alanine 204 is disordered.

As to expression, expressed in young panicles.

The protein resides in the nucleus. Functionally, trans-acting factor that binds specifically to the consensus nucleotide sequence 5'-TNCGTACAA-3'. May be involved in panicle development. This chain is Squamosa promoter-binding-like protein 16 (SPL16), found in Oryza sativa subsp. japonica (Rice).